The following is a 716-amino-acid chain: Exocyst complex component 8 (716 aa).

Residue Ser15 is modified to Phosphoserine. A disordered region spans residues Gly129–Gln150. The region spanning Tyr173–Arg273 is the PH domain. Over residues Leu275–Glu284 the composition is skewed to basic and acidic residues. A disordered region spans residues Leu275–Glu319. The segment covering Phe303 to Glu319 has biased composition (acidic residues). Thr313 is modified (phosphothreonine).

Belongs to the EXO84 family. In terms of assembly, the exocyst complex is composed of EXOC1, EXOC2, EXOC3, EXOC4, EXOC5, EXOC6, EXOC7 and EXOC8. Interacts (via PH domain) with GTP-bound RALA and RALB. Interacts with SH3BP1; required for the localization of both SH3BP1 and the exocyst to the leading edge of migrating cells.

The protein localises to the cytoplasm. It is found in the perinuclear region. The protein resides in the cell projection. Its subcellular location is the growth cone. Component of the exocyst complex involved in the docking of exocytic vesicles with fusion sites on the plasma membrane. This is Exocyst complex component 8 (Exoc8) from Mus musculus (Mouse).